Reading from the N-terminus, the 426-residue chain is Dihydrofolate synthase/folylpolyglutamate synthase (426 aa).

An ATP-binding site is contributed by Gly-58–Ser-61. Ser-82 contacts Mg(2+). Thr-121 to Glu-124 is a 7,8-dihydropteroate binding site. Glu-145 lines the Mg(2+) pocket. 7,8-dihydropteroate is bound at residue Leu-152–Ala-154. Residue His-172 participates in Mg(2+) binding. 2 residues coordinate ATP: Arg-289 and Asp-302.

This sequence belongs to the folylpolyglutamate synthase family. In terms of assembly, monomer. Mg(2+) is required as a cofactor.

It catalyses the reaction 7,8-dihydropteroate + L-glutamate + ATP = 7,8-dihydrofolate + ADP + phosphate + H(+). The catalysed reaction is (6S)-5,6,7,8-tetrahydrofolyl-(gamma-L-Glu)(n) + L-glutamate + ATP = (6S)-5,6,7,8-tetrahydrofolyl-(gamma-L-Glu)(n+1) + ADP + phosphate + H(+). The enzyme catalyses 10-formyltetrahydrofolyl-(gamma-L-Glu)(n) + L-glutamate + ATP = 10-formyltetrahydrofolyl-(gamma-L-Glu)(n+1) + ADP + phosphate + H(+). It carries out the reaction (6R)-5,10-methylenetetrahydrofolyl-(gamma-L-Glu)(n) + L-glutamate + ATP = (6R)-5,10-methylenetetrahydrofolyl-(gamma-L-Glu)(n+1) + ADP + phosphate + H(+). It functions in the pathway cofactor biosynthesis; tetrahydrofolate biosynthesis; 7,8-dihydrofolate from 2-amino-4-hydroxy-6-hydroxymethyl-7,8-dihydropteridine diphosphate and 4-aminobenzoate: step 2/2. The protein operates within cofactor biosynthesis; tetrahydrofolylpolyglutamate biosynthesis. Its function is as follows. Functions in two distinct reactions of the de novo folate biosynthetic pathway. Catalyzes the addition of a glutamate residue to dihydropteroate (7,8-dihydropteroate or H2Pte) to form dihydrofolate (7,8-dihydrofolate monoglutamate or H2Pte-Glu). Also catalyzes successive additions of L-glutamate to tetrahydrofolate or 10-formyltetrahydrofolate or 5,10-methylenetetrahydrofolate, leading to folylpolyglutamate derivatives. The chain is Dihydrofolate synthase/folylpolyglutamate synthase (folC) from Buchnera aphidicola subsp. Baizongia pistaciae (strain Bp).